Here is a 201-residue protein sequence, read N- to C-terminus: MAASKAAKSSEDRAGGGGGGGGKEVFKAGRTLLKVLKALSLRRDSAFEANSASAANLAAEGGGGGGRAATSRSRRILLMAAFWAARRGASCAALTAARAAAFLALAMAAYLAALRARMCSRMICWPLTASLFFRAANCCLCVRGGGGGASPLQGRRSQGAVIAASSAERTTSIAVEVCLAEGTAKGPFEGWSNLCCPTRAG.

The disordered stretch occupies residues 1–22 (MAASKAAKSSEDRAGGGGGGGG).

This is an uncharacterized protein from Tomato ringspot virus (isolate raspberry) (ToRSV).